We begin with the raw amino-acid sequence, 57 residues long: Putative secreted protein MT0250 (57 aa).

An N-terminal signal peptide occupies residues 1–32 (MNRIVAPAAASVVVGLLLGAAAIFGVTLMVQQ). The interval 34-57 (KKPPLPGGDPSSSVLNRVEYGNRS) is disordered.

The sequence is that of Putative secreted protein MT0250 from Mycobacterium tuberculosis (strain CDC 1551 / Oshkosh).